Here is a 163-residue protein sequence, read N- to C-terminus: ATP synthase subunit b (163 aa).

A helical membrane pass occupies residues 10-29 (VFMQMFHFLLMLVVLRLFAY).

It belongs to the ATPase B chain family. F-type ATPases have 2 components, F(1) - the catalytic core - and F(0) - the membrane proton channel. F(1) has five subunits: alpha(3), beta(3), gamma(1), delta(1), epsilon(1). F(0) has three main subunits: a(1), b(2) and c(10-14). The alpha and beta chains form an alternating ring which encloses part of the gamma chain. F(1) is attached to F(0) by a central stalk formed by the gamma and epsilon chains, while a peripheral stalk is formed by the delta and b chains.

It localises to the cell membrane. In terms of biological role, f(1)F(0) ATP synthase produces ATP from ADP in the presence of a proton or sodium gradient. F-type ATPases consist of two structural domains, F(1) containing the extramembraneous catalytic core and F(0) containing the membrane proton channel, linked together by a central stalk and a peripheral stalk. During catalysis, ATP synthesis in the catalytic domain of F(1) is coupled via a rotary mechanism of the central stalk subunits to proton translocation. Functionally, component of the F(0) channel, it forms part of the peripheral stalk, linking F(1) to F(0). In Desulforudis audaxviator (strain MP104C), this protein is ATP synthase subunit b.